The chain runs to 247 residues: V-type proton ATPase subunit D (247 aa).

This sequence belongs to the V-ATPase D subunit family. In terms of assembly, V-ATPase is a heteromultimeric enzyme made up of two complexes: the ATP-hydrolytic V1 complex and the proton translocation V0 complex. The V1 complex consists of three catalytic AB heterodimers that form a heterohexamer, three peripheral stalks each consisting of EG heterodimers, one central rotor including subunits D and F, and the regulatory subunits C and H. The proton translocation complex V0 consists of the proton transport subunit a, a ring of proteolipid subunits c9c'', rotary subunit d, subunits e and f, and the accessory subunits ATP6AP1/Ac45 and ATP6AP2/PRR. Interacts with SNX10.

Its subcellular location is the membrane. The protein resides in the cytoplasmic vesicle. It localises to the clathrin-coated vesicle membrane. It is found in the cytoplasm. The protein localises to the cytoskeleton. Its subcellular location is the microtubule organizing center. The protein resides in the centrosome. It localises to the cell projection. It is found in the cilium. Subunit of the V1 complex of vacuolar(H+)-ATPase (V-ATPase), a multisubunit enzyme composed of a peripheral complex (V1) that hydrolyzes ATP and a membrane integral complex (V0) that translocates protons. V-ATPase is responsible for acidifying and maintaining the pH of intracellular compartments and in some cell types, is targeted to the plasma membrane, where it is responsible for acidifying the extracellular environment. May play a role in cilium biogenesis through regulation of the transport and the localization of proteins to the cilium. The protein is V-type proton ATPase subunit D (ATP6V1D) of Homo sapiens (Human).